Reading from the N-terminus, the 252-residue chain is Carboxymethylenebutenolidase (252 aa).

The interval 1-28 is disordered; the sequence is MCHNKSSAPPTPAHISIQQNRTPGTDPV. Active-site residues include cysteine 126, aspartate 183, and histidine 214.

The protein belongs to the dienelactone hydrolase family.

The enzyme catalyses 2-(5-oxo-2,5-dihydrofuran-2-ylidene)acetate + H2O = 4-oxohex-2-enedioate + H(+). The protein operates within aromatic compound metabolism; 3-chlorocatechol degradation. Ring cleavage of cyclic ester dienelactone to produce maleylacetate. The sequence is that of Carboxymethylenebutenolidase (clcD) from Rhodococcus opacus (Nocardia opaca).